Reading from the N-terminus, the 211-residue chain is Bcl-2 homologous antagonist/killer (211 aa).

Positions 1–28 are disordered; sequence MASGQGPGPPRQECGEPALPSASEEQVA. A2 is subject to N-acetylalanine. The short motif at 74-88 is the BH3 element; the sequence is VGRQLAIIGDDINRR. The BH1 motif lies at 117-136; it reads SLFESGINWGRVVALLGFGY. Zn(2+) contacts are provided by D160 and H164. Positions 169-184 match the BH2 motif; it reads RWIAQRGGWVAALNLG. A helical membrane pass occupies residues 188–205; sequence ILNVLVVLGVVLLGQFVV.

It belongs to the Bcl-2 family. In terms of assembly, homodimer. Formation of the homodimer is zinc-dependent. Forms heterodimers with BCL2 and BCL2L1 isoform Bcl-X(L). Forms heterooligomers with BAX. Interacts with BCL2A1. Interacts with RTL10/BOP. Interacts with VDAC1. Interacts with GIMAP3/IAN4 and GIMAP5/IAN5. (Microbial infection) Interacts with vaccinia virus protein F1. As to quaternary structure, (Microbial infection) Interacts with myxoma virus protein M11L. In terms of assembly, (Microbial infection) Interacts with Epstein-Barr virus protein BALF1. (Microbial infection) Interacts with adenovirus protein E1B 19K. As to expression, expressed in a wide variety of tissues, with highest levels in the heart and skeletal muscle.

Its subcellular location is the mitochondrion outer membrane. In terms of biological role, plays a role in the mitochondrial apoptotic process. Upon arrival of cell death signals, promotes mitochondrial outer membrane (MOM) permeabilization by oligomerizing to form pores within the MOM. This releases apoptogenic factors into the cytosol, including cytochrome c, promoting the activation of caspase 9 which in turn processes and activates the effector caspases. The polypeptide is Bcl-2 homologous antagonist/killer (BAK1) (Homo sapiens (Human)).